The chain runs to 383 residues: Acetylornithine deacetylase (383 aa).

His-80 contributes to the Zn(2+) binding site. Asp-82 is a catalytic residue. Position 112 (Asp-112) interacts with Zn(2+). Glu-144 is a catalytic residue. Zn(2+) contacts are provided by Glu-145, Glu-169, and His-355.

Belongs to the peptidase M20A family. ArgE subfamily. In terms of assembly, homodimer. Zn(2+) is required as a cofactor. Requires Co(2+) as cofactor. The cofactor is glutathione.

It localises to the cytoplasm. The enzyme catalyses N(2)-acetyl-L-ornithine + H2O = L-ornithine + acetate. It participates in amino-acid biosynthesis; L-arginine biosynthesis; L-ornithine from N(2)-acetyl-L-ornithine (linear): step 1/1. In terms of biological role, catalyzes the hydrolysis of the amide bond of N(2)-acetylated L-amino acids. Cleaves the acetyl group from N-acetyl-L-ornithine to form L-ornithine, an intermediate in L-arginine biosynthesis pathway, and a branchpoint in the synthesis of polyamines. This Escherichia coli (strain SMS-3-5 / SECEC) protein is Acetylornithine deacetylase.